Here is a 459-residue protein sequence, read N- to C-terminus: MAEEKKEELFTSIGNAAQNVSTAEDREGNGVQEVESLCMECGKNGTTKLLLTVIPYFREVVLMSFECPHCGFKNAQVQHAETIQPEGSKITFHVEDKEDLNRTVVKSQEAIVSIPEIQLEIPGRLGQLTTIEGILSNVVDDLSKEQESRKESAPQLYDQINAFIEKVNSLRSGSVPFTITVDDITGNSWIEMKPGRDGDRWSQVSYKRTLEQNTKLGLVDTDQPEDVKTQTNNASNTLKHDATAVEVDPNEVHTFHATCPSCSHQCDTHMKLLDIPHFKEVIIMSTVCDRCGYRSNEVKTGGEIPPKGRKITLKVMDAEDLSRDILKSETASLKIPELGLDLFPGTLGGRFTTIEGLLAQVYDELYGRVFSQETDSMTPEQVANWQQFLCNLTAAREGATQFTLILDDPLSQSYLQNYYAPDPDPNMTIEEYERSFQVNEELGLNDMKTENYEKDGGKK.

C4-type zinc fingers lie at residues Cys38 to Cys70 and Cys259 to Cys291.

This sequence belongs to the ZPR1 family.

The protein localises to the cytoplasm. It localises to the nucleus. Acts as a protein folding chaperone for elongation factor 1-alpha. The polypeptide is Zinc finger chaperone zpr1 (Schizosaccharomyces pombe (strain 972 / ATCC 24843) (Fission yeast)).